We begin with the raw amino-acid sequence, 487 residues long: Capsid protein (487 aa).

Positions 1-66 (MNQDTPLANL…VPPAGPSRSA (66 aa)) are disordered. Residues 30 to 41 (NVAPPAQGAVQQ) are compositionally biased toward low complexity.

It localises to the virion. Functionally, the capsid protein self-assembles to form an icosahedral capsid with a T=2 symmetry made of 120 subunits. This Trifolium repens (Creeping white clover) protein is Capsid protein.